We begin with the raw amino-acid sequence, 930 residues long: Inter-alpha-trypsin inhibitor heavy chain H4 (930 aa).

Positions 1 to 28 (MKPPRPVRTCSKVLVLLSLLAIHQTTTA) are cleaved as a signal peptide. The VIT domain occupies 29–148 (EKNGIDIYSL…KITFELVYEE (120 aa)). Residues N81 and N207 are each glycosylated (N-linked (GlcNAc...) asparagine). Positions 272–432 (PKNVVFVIDK…YAFLEKLALD (161 aa)) constitute a VWFA domain. N274 carries an N-linked (GlcNAc...) asparagine; atypical glycan. N-linked (GlcNAc...) asparagine glycosylation is found at N517 and N577. The segment at 595–618 (KPDDQEQSQVAEKPMEGESRNRNV) is disordered. Positions 658–688 (MNFRPGVLSSRQLGLPGPPDVPDHAAYHPFR) are proline-rich (PRR) potential bioactive peptide. A propeptide spans 662-688 (PGVLSSRQLGLPGPPDVPDHAAYHPFR) (potentially active peptide). O-linked (GalNAc...) threonine glycosylation is found at T719, T720, and T722. Residues 719–725 (TTMTTQT) form an O-glycosylated at three sites region. An intrachain disulfide couples C747 to C925.

Belongs to the ITIH family. Interacts (via C-terminus) with DNAJC1 (via SANT 2 domain); this interaction protects ITIH4 against cleavage by kallikrein in vitro. In terms of processing, cleaved by plasma kallikrein to yield 100 kDa and 35 kDa fragments, and the resulting 100 kDa fragment is further converted to a 70 kDa fragment. Post-translationally, N- and O-glycosylated. In urine, O-linked glycosylation on threonine residues in the region from Thr-719 to Thr-725 consists of core 1 or possibly core 8 glycans. Mainly Hex(HexNAc)(2), but also some Hex(3)(HexNAc)(3). N-glycosylated but not O-glycosylated in plasma. In terms of tissue distribution, liver specific.

It is found in the secreted. Functionally, type II acute-phase protein (APP) involved in inflammatory responses to trauma. May also play a role in liver development or regeneration. This Homo sapiens (Human) protein is Inter-alpha-trypsin inhibitor heavy chain H4 (ITIH4).